The sequence spans 308 residues: Ribosomal RNA large subunit methyltransferase F (308 aa).

The protein belongs to the methyltransferase superfamily. METTL16/RlmF family.

It is found in the cytoplasm. The enzyme catalyses adenosine(1618) in 23S rRNA + S-adenosyl-L-methionine = N(6)-methyladenosine(1618) in 23S rRNA + S-adenosyl-L-homocysteine + H(+). Its function is as follows. Specifically methylates the adenine in position 1618 of 23S rRNA. In Escherichia coli O17:K52:H18 (strain UMN026 / ExPEC), this protein is Ribosomal RNA large subunit methyltransferase F.